Here is a 148-residue protein sequence, read N- to C-terminus: Large ribosomal subunit protein uL15 (148 aa).

Residues 1–47 (MAFSLENLRPAPGSRPKSKRVGRGSSSGKGKTSSRGHKGQGRGTGKV) form a disordered region.

This sequence belongs to the universal ribosomal protein uL15 family. In terms of assembly, part of the 50S ribosomal subunit.

Its function is as follows. Binds to the 23S rRNA. This chain is Large ribosomal subunit protein uL15, found in Kosmotoga olearia (strain ATCC BAA-1733 / DSM 21960 / TBF 19.5.1).